Reading from the N-terminus, the 84-residue chain is Cell division topological specificity factor (84 aa).

The protein belongs to the MinE family.

Functionally, prevents the cell division inhibition by proteins MinC and MinD at internal division sites while permitting inhibition at polar sites. This ensures cell division at the proper site by restricting the formation of a division septum at the midpoint of the long axis of the cell. The sequence is that of Cell division topological specificity factor from Azotobacter vinelandii (strain DJ / ATCC BAA-1303).